The chain runs to 369 residues: 3-dehydroquinate synthase (369 aa).

NAD(+) is bound by residues 75–80, 109–113, 133–134, Lys146, Lys155, and 173–176; these read DGEEHK, GVIGD, TT, and TLKT. Zn(2+) contacts are provided by Glu188, His251, and His268.

This sequence belongs to the sugar phosphate cyclases superfamily. Dehydroquinate synthase family. The cofactor is Co(2+). It depends on Zn(2+) as a cofactor. NAD(+) serves as cofactor.

The protein resides in the cytoplasm. The enzyme catalyses 7-phospho-2-dehydro-3-deoxy-D-arabino-heptonate = 3-dehydroquinate + phosphate. It functions in the pathway metabolic intermediate biosynthesis; chorismate biosynthesis; chorismate from D-erythrose 4-phosphate and phosphoenolpyruvate: step 2/7. Catalyzes the conversion of 3-deoxy-D-arabino-heptulosonate 7-phosphate (DAHP) to dehydroquinate (DHQ). This chain is 3-dehydroquinate synthase, found in Legionella pneumophila subsp. pneumophila (strain Philadelphia 1 / ATCC 33152 / DSM 7513).